The following is a 405-amino-acid chain: Serpin I2 (405 aa).

The first 18 residues, 1 to 18 (MDTIFLWSLLLLFFGSQA), serve as a signal peptide directing secretion. N202, N207, and N306 each carry an N-linked (GlcNAc...) asparagine glycan.

Belongs to the serpin family. Expressed in pancreas and adipose tissues.

It localises to the secreted. This is Serpin I2 (SERPINI2) from Homo sapiens (Human).